A 330-amino-acid chain; its full sequence is MKTLPLAVPHMSQDEAEEVFGWILDGEASEEEIARFLLAMTERSETADEIAGAARALRDRLIPVEAPEGAVDCCGTGGDGHHTLNVSTAVSLVVAAAGVPVAKHGNRAASSKSGAADTLEALGLDMEAVGRTAEKTLAEIGICFLFAKNHHPAMGRIQPIRQRLGKRTIFNLMGPLSNPAGVKRQLIGIARPGYVPIYAEAKAKLGTERTYIVSGDEGLDELSLAGGNELADVCGNEFEMRRVYAEMIGLPHAPVEAIRGGDAAHNAMALKALLEGTPGPYRDAVVFNAAATLMAAGAVEDWEVGAAMAVESLDSGKANELLGKWIEMAV.

5-phospho-alpha-D-ribose 1-diphosphate contacts are provided by residues glycine 75, 78–79 (GD), threonine 83, 85–88 (NVST), 103–111 (KHGNRAASS), and alanine 115. Glycine 75 contributes to the anthranilate binding site. Serine 87 contributes to the Mg(2+) binding site. An anthranilate-binding site is contributed by asparagine 106. Arginine 161 contacts anthranilate. Mg(2+)-binding residues include aspartate 220 and glutamate 221.

It belongs to the anthranilate phosphoribosyltransferase family. Homodimer. It depends on Mg(2+) as a cofactor.

The catalysed reaction is N-(5-phospho-beta-D-ribosyl)anthranilate + diphosphate = 5-phospho-alpha-D-ribose 1-diphosphate + anthranilate. Its pathway is amino-acid biosynthesis; L-tryptophan biosynthesis; L-tryptophan from chorismate: step 2/5. Its function is as follows. Catalyzes the transfer of the phosphoribosyl group of 5-phosphorylribose-1-pyrophosphate (PRPP) to anthranilate to yield N-(5'-phosphoribosyl)-anthranilate (PRA). The protein is Anthranilate phosphoribosyltransferase of Erythrobacter litoralis (strain HTCC2594).